A 1270-amino-acid polypeptide reads, in one-letter code: Nuclear exosome regulator NRDE2 (1270 aa).

Disordered stretches follow at residues 1–22 (MFRAYGNNGLKNPERISGENPD) and 119–209 (SVKS…HTLM). Polar residues predominate over residues 119-135 (SVKSLNGCQDPPETSQQ). The span at 164 to 184 (QRSRSREKKRRKKERRRKRSS) shows a compositional bias: basic residues. Residues 192 to 204 (RSRDRSSRARDTS) show a composition bias toward basic and acidic residues.

This sequence belongs to the NRDE2 family. As to quaternary structure, interacts with nrde-3.

It localises to the nucleus. Its subcellular location is the nucleus speckle. The protein localises to the nucleolus. Functionally, protein of the nuclear speckles that regulates RNA exosomal degradation. Involved in short interfering RNAs-mediated silencing in nuclei. Functions with nrde-3 in the nuclear RNA-mediated gene silencing (RNAi) pathway to regulate gene expression via inhibition of RNA polymerases I and II during the elongation phase of transcription. Required for exogenous RNAi-induced H3K27 methylation. This Caenorhabditis elegans protein is Nuclear exosome regulator NRDE2 (nrde-2).